Here is a 695-residue protein sequence, read N- to C-terminus: Polyribonucleotide nucleotidyltransferase (695 aa).

Mg(2+) contacts are provided by Asp-486 and Asp-492. The 60-residue stretch at 553–612 folds into the KH domain; sequence PRIETMQINTSKIATVIGPGGKQIRQIIERSGAQVDINDDGVINIAASTQESINKAKELI. The region spanning 622-690 is the S1 motif domain; that stretch reads GKVYNGRVTS…EKGQLKLSHK (69 aa).

The protein belongs to the polyribonucleotide nucleotidyltransferase family. Mg(2+) is required as a cofactor.

The protein localises to the cytoplasm. The enzyme catalyses RNA(n+1) + phosphate = RNA(n) + a ribonucleoside 5'-diphosphate. Its function is as follows. Involved in mRNA degradation. Catalyzes the phosphorolysis of single-stranded polyribonucleotides processively in the 3'- to 5'-direction. This is Polyribonucleotide nucleotidyltransferase from Chlamydia trachomatis serovar D (strain ATCC VR-885 / DSM 19411 / UW-3/Cx).